The chain runs to 175 residues: Ferritin light chain (175 aa).

Serine 2 is modified (N-acetylserine). The 150-residue stretch at 7 to 156 (QNYSTEVEAA…DHLTNLRRLS (150 aa)) folds into the Ferritin-like diiron domain. 5 residues coordinate Fe cation: glutamate 54, glutamate 57, glutamate 58, glutamate 61, and glutamate 64.

Belongs to the ferritin family. In terms of assembly, oligomer of 24 subunits. There are two types of subunits: L (light) chain and H (heavy) chain. The major chain can be light or heavy, depending on the species and tissue type. The functional molecule forms a roughly spherical shell with a diameter of 12 nm and contains a central cavity into which the insoluble mineral iron core is deposited. Interacts with NCOA4.

It is found in the cytoplasmic vesicle. Its subcellular location is the autophagosome. It localises to the cytoplasm. The protein localises to the autolysosome. Functionally, stores iron in a soluble, non-toxic, readily available form. Important for iron homeostasis. Iron is taken up in the ferrous form and deposited as ferric hydroxides after oxidation. Also plays a role in delivery of iron to cells. Mediates iron uptake in capsule cells of the developing kidney. Delivery to lysosomes by the cargo receptor NCOA4 for autophagic degradation and release or iron. This chain is Ferritin light chain (FTL), found in Felis catus (Cat).